The primary structure comprises 151 residues: Aspartate carbamoyltransferase regulatory chain (151 aa).

The Zn(2+) site is built by Cys-108, Cys-113, Cys-138, and Cys-141.

Belongs to the PyrI family. As to quaternary structure, contains catalytic and regulatory chains. Zn(2+) serves as cofactor.

Functionally, involved in allosteric regulation of aspartate carbamoyltransferase. The polypeptide is Aspartate carbamoyltransferase regulatory chain (Pyrobaculum islandicum (strain DSM 4184 / JCM 9189 / GEO3)).